The following is a 166-amino-acid chain: Probable histone deacetylase complex subunit SAP18 (166 aa).

Positions 143-166 (GRRFNNREQGDRFDHRQRQRSPIR) are disordered. The segment covering 147–158 (NNREQGDRFDHR) has biased composition (basic and acidic residues).

It belongs to the SAP18 family. In terms of assembly, interacts with SIN3 and histone deacetylase.

Its function is as follows. Acts in transcription repression. Involved in the tethering of the SIN3 complex to core histone proteins. The polypeptide is Probable histone deacetylase complex subunit SAP18 (Caenorhabditis elegans).